Here is a 587-residue protein sequence, read N- to C-terminus: Lipoprotein LpqB (587 aa).

Positions 1 to 19 (MERLMRLTILLFLGAVLAG) are cleaved as a signal peptide. Residue cysteine 20 is the site of N-palmitoyl cysteine attachment. Residue cysteine 20 is the site of S-diacylglycerol cysteine attachment.

This sequence belongs to the LpqB lipoprotein family.

It localises to the cell membrane. The sequence is that of Lipoprotein LpqB from Mycobacterium bovis (strain ATCC BAA-935 / AF2122/97).